Here is a 343-residue protein sequence, read N- to C-terminus: Protease inhibitor Egf1.5a (343 aa).

The first 28 residues, 1 to 28 (MYIDTGIMSNNIFLFAFFALVGLTRIEA), serve as a signal peptide directing secretion. One can recognise a TIL domain in the interval 52–104 (CRENEHYNSTRIECEDECNDRNNKLCYRFQQFCWCNEGYIRNSSHICVKLEDC).

It belongs to the polydnaviridae EGF-like motif protein family. As to quaternary structure, interacts with host PAP1, PAP3 and SPH2.

Functionally, counteracts the host humoral immune response by inhibiting the processing and the amidolytic activity of host PAP1 and PAP3. Thereby, melanization of host hemolymph, normally producing several reactive intermediates toxic for viruses, is deregulated and proper immune response cannot occur. In Microplitis demolitor bracovirus (isolate Webb) (MdBV), this protein is Protease inhibitor Egf1.5a (O1).